The following is an 840-amino-acid chain: Translation initiation factor IF-2 (840 aa).

Disordered stretches follow at residues 94 to 157 and 169 to 256; these read KRSP…AGAE and PVAK…PTGP. Residues 95-143 are compositionally biased toward basic and acidic residues; it reads RSPDEIEAERQRELEEQRAAEEAERLKAEEAAARQRAEEEARKAEEAAR. Residues 144–157 are compositionally biased toward low complexity; it reads AKAAQEAAATAGAE. Composition is skewed to basic and acidic residues over residues 175-191 and 223-232; these read AVEE…PKRD and STDEESDGYR. Residues 233–247 show a composition bias toward basic residues; it reads RGGRGGKSKLKKRNQ. The 170-residue stretch at 340 to 509 folds into the tr-type G domain; it reads TRAPVVTVMG…LLQAEVLELK (170 aa). Positions 349–356 are G1; that stretch reads GHVDHGKT. Residue 349–356 coordinates GTP; it reads GHVDHGKT. The G2 stretch occupies residues 374–378; that stretch reads GITQH. The G3 stretch occupies residues 395–398; the sequence is DTPG. Residues 395-399 and 449-452 each bind GTP; these read DTPGH and NKID. The G4 stretch occupies residues 449-452; the sequence is NKID. The segment at 485 to 487 is G5; sequence SAK.

The protein belongs to the TRAFAC class translation factor GTPase superfamily. Classic translation factor GTPase family. IF-2 subfamily.

It is found in the cytoplasm. Its function is as follows. One of the essential components for the initiation of protein synthesis. Protects formylmethionyl-tRNA from spontaneous hydrolysis and promotes its binding to the 30S ribosomal subunits. Also involved in the hydrolysis of GTP during the formation of the 70S ribosomal complex. The protein is Translation initiation factor IF-2 of Pseudomonas aeruginosa (strain UCBPP-PA14).